The primary structure comprises 353 residues: Ribosome biogenesis protein BRX1 homolog (353 aa).

Residues 1-10 (MAATKRKRRG) are compositionally biased toward basic residues. The tract at residues 1-46 (MAATKRKRRGGLAVQAKKLKRDAKDGKLPAKANDVSEEAAEEEKDR) is disordered. The 190-residue stretch at 60-249 (ERILIFSSRG…LIKIFQGSFG (190 aa)) folds into the Brix domain. Lysine 160 is covalently cross-linked (Glycyl lysine isopeptide (Lys-Gly) (interchain with G-Cter in SUMO2)). At serine 261 the chain carries Phosphoserine. Lysine 276 is subject to N6-acetyllysine. Residues lysine 314 and lysine 322 each participate in a glycyl lysine isopeptide (Lys-Gly) (interchain with G-Cter in SUMO2) cross-link.

The protein belongs to the BRX1 family.

The protein resides in the nucleus. Its subcellular location is the nucleolus. Required for biogenesis of the 60S ribosomal subunit. This Bos taurus (Bovine) protein is Ribosome biogenesis protein BRX1 homolog (BRIX1).